The following is a 56-amino-acid chain: Large ribosomal subunit protein bL33 (56 aa).

It belongs to the bacterial ribosomal protein bL33 family.

This is Large ribosomal subunit protein bL33 from Nocardioides sp. (strain ATCC BAA-499 / JS614).